The primary structure comprises 655 residues: Carboxypeptidase S1 homolog B (655 aa).

The first 21 residues, 1 to 21, serve as a signal peptide directing secretion; it reads MRPFARAALCLLAAAGHLAQA. Residues Cys51 and Cys123 are joined by a disulfide bond. Residues Asn130, Asn163, and Asn186 are each glycosylated (N-linked (GlcNAc...) asparagine). Ser240 is a catalytic residue. Asn266, Asn302, and Asn311 each carry an N-linked (GlcNAc...) asparagine glycan. 2 disulfides stabilise this stretch: Cys328–Cys364 and Cys335–Cys357. A glycan (N-linked (GlcNAc...) asparagine) is linked at Asn414. Asp459 is a catalytic residue. Cys462 contacts substrate. N-linked (GlcNAc...) asparagine glycans are attached at residues Asn475, Asn493, and Asn506. Residue His517 is part of the active site. Glu518 is a binding site for substrate. Asn598 and Asn612 each carry an N-linked (GlcNAc...) asparagine glycan. A lipid anchor (GPI-anchor amidated glycine) is attached at Gly631. Residues 632-655 constitute a propeptide, removed in mature form; sequence AALVSGRIKFHVHVIKSFDYYIFI.

The protein belongs to the peptidase S10 family.

It localises to the cell membrane. The catalysed reaction is Preferential release of a C-terminal arginine or lysine residue.. In terms of biological role, extracellular serine carboxypeptidase that contributes to pathogenicity. The sequence is that of Carboxypeptidase S1 homolog B (SCPB) from Arthroderma otae (strain ATCC MYA-4605 / CBS 113480) (Microsporum canis).